The following is a 437-amino-acid chain: Pterin deaminase (437 aa).

A divalent metal cation is bound by residues H80 and H82. Substrate is bound at residue K85. An a divalent metal cation-binding site is contributed by H231. The Proton donor role is filled by E234. D331 contributes to the a divalent metal cation binding site. 331 to 332 is a binding site for substrate; that stretch reads DN.

Belongs to the metallo-dependent hydrolases superfamily. Pterin deaminase family. A divalent metal cation serves as cofactor.

It catalyses the reaction a 2-amino-4-hydroxypteridine + H2O + H(+) = a 2,4-dihydroxypteridine + NH4(+). The enzyme catalyses L-sepiapterin + H2O + H(+) = (S)-xanthopterin-B2 + NH4(+). In terms of biological role, catalyzes the deamination of many pterin metabolites, such as formylpterin, pterin-6-carboxylate, pterin-7-carboxylate, pterin, hydroxymethylpterin, biopterin, D-(+)-neopterin, isoxanthopterin, sepiapterin, folate, xanthopterin, and 7,8-dihydrohydroxymethylpterin. May be involved in a degradative pathway for catabolizing pterin rings. This chain is Pterin deaminase, found in Rhizobium rhizogenes (strain K84 / ATCC BAA-868) (Agrobacterium radiobacter).